Reading from the N-terminus, the 307-residue chain is Putative F-box/LRR-repeat protein 22 (307 aa).

The segment covering 1–15 (MVTSSSSPPLATSQL) has biased composition (polar residues). The disordered stretch occupies residues 1–26 (MVTSSSSPPLATSQLPVMKGEEKPSN). One can recognise an F-box domain in the interval 24-71 (PSNWAELPPDLLSSILLRLSPLEILENARKVCRSWRRVSKDPLIWRRI). LRR repeat units lie at residues 108–133 (WRFQ…RVKG), 158–183 (YCSI…KLVG), 185–210 (WSHL…HLQL), 212–237 (SNGL…DLRQ), and 244–270 (FGDL…DYNY). Positions 279 to 289 (IEDEKGEEEEN) are enriched in acidic residues. Residues 279–307 (IEDEKGEEEENYSYGSDDTEYGYRRSADF) form a disordered region.

The polypeptide is Putative F-box/LRR-repeat protein 22 (FBL22) (Arabidopsis thaliana (Mouse-ear cress)).